A 637-amino-acid chain; its full sequence is Chaperone protein DnaK (637 aa).

At threonine 198 the chain carries Phosphothreonine; by autocatalysis. Residues 597–637 (MYQQAAQESGQTEGAAQDPKGAAQDDDVVDADFEEVKDHKK) form a disordered region. Residues 600–610 (QAAQESGQTEG) show a composition bias toward polar residues. Acidic residues predominate over residues 620–629 (QDDDVVDADF).

It belongs to the heat shock protein 70 family.

In terms of biological role, acts as a chaperone. This Desulforapulum autotrophicum (strain ATCC 43914 / DSM 3382 / VKM B-1955 / HRM2) (Desulfobacterium autotrophicum) protein is Chaperone protein DnaK.